A 276-amino-acid chain; its full sequence is Adenylate kinase (276 aa).

51 to 56 is a binding site for ATP; it reads GAGKGT. Positions 71-100 are NMP; the sequence is ATGDMLRSQVAKKTPLGQAAKKIMDAGGLV. AMP contacts are provided by residues threonine 72, arginine 77, 98–100, 127–130, and glutamine 134; these read GLV and GFPR. The LID stretch occupies residues 168 to 205; that stretch reads GRLVHPASGRSYHVKFNPPKKEMTDDITGEPLIQRSDD. ATP contacts are provided by residues arginine 169 and 178–179; that span reads SY. AMP-binding residues include arginine 202 and arginine 213. Glutamine 241 lines the ATP pocket.

The protein belongs to the adenylate kinase family. AK2 subfamily. In terms of assembly, monomer.

Its subcellular location is the cytoplasm. It localises to the cytosol. The protein localises to the mitochondrion intermembrane space. The catalysed reaction is AMP + ATP = 2 ADP. Its function is as follows. Catalyzes the reversible transfer of the terminal phosphate group between ATP and AMP. Plays an important role in cellular energy homeostasis and in adenine nucleotide metabolism. Adenylate kinase activity is critical for regulation of the phosphate utilization and the AMP de novo biosynthesis pathways. The sequence is that of Adenylate kinase from Podospora anserina (strain S / ATCC MYA-4624 / DSM 980 / FGSC 10383) (Pleurage anserina).